Consider the following 195-residue polypeptide: MTHSTDITTLARWFAADFSNQQQAFDNPPLFAHIRVCMRPLPYQLLNGLSLYLEQAYDITLNQPYRVRVLKLVPSENHIEIENYIIDQEAEFYGASRDPQRLKNLKTEYIKKLPGCTFITKWTGKSFKGEVEPGKGCTVVREGKSTYLKSYFEINEHKFISHDTGYDPETDQQVWGAIAGPFEFVRWASFADEVI.

It belongs to the CpcT/CpeT biliprotein lyase family.

Its function is as follows. Covalently attaches a chromophore to Cys residue(s) of phycobiliproteins. This chain is Chromophore lyase CpcT/CpeT 2, found in Trichodesmium erythraeum (strain IMS101).